The following is a 439-amino-acid chain: GlutamylGlutaminyl-tRNA synthetase (439 aa).

Residues 6–16 (PSPTGDMHIGN) carry the 'HIGH' region motif. The short motif at 232-236 (KMSKR) is the 'KMSKS' region element. K235 lines the ATP pocket.

Belongs to the class-I aminoacyl-tRNA synthetase family. Glutamate--tRNA ligase type 1 subfamily. As to quaternary structure, monomer.

The protein resides in the cytoplasm. The catalysed reaction is tRNA(Glu) + L-glutamate + ATP = L-glutamyl-tRNA(Gln) + AMP + diphosphate. Functionally, aminoacylates tRNA(Gln) with glutamate. Does not aminoacylate tRNA(Glu). This chain is GlutamylGlutaminyl-tRNA synthetase (gltX2), found in Helicobacter pylori (strain ATCC 700392 / 26695) (Campylobacter pylori).